A 268-amino-acid chain; its full sequence is MEFAHLTVLSLFCLAFVGITATSSGEDYWQSIWPNTPLPKTFSDLSIPSGKTNSLPIKSEELKQYSTLFFEHDLHPRKNFILGNTNSVGSIIRPFTKSRQGVTDSIWLANKEKQSLEDFCYSPTAIAEHKHCVSSLKSMIDQVISHFGSTKIKAISSNFAPYQDQYVVEDVKKVGDNAVMCHRLNFEKVVFNCHQVRDTTAYVVSLVASDGTKTKALTVCHHDTRGMNPELLYEALEVTLGTVPVCHFIGNKAAAWVPNHTADNLCVM.

The signal sequence occupies residues 1 to 22 (MEFAHLTVLSLFCLAFVGITAT). Residues 68 to 259 (LFFEHDLHPR…GNKAAAWVPN (192 aa)) form the BURP domain.

The polypeptide is Unknown seed protein 30.1 (Vicia faba (Broad bean)).